Consider the following 186-residue polypeptide: MYEYSVLAAESGEDVNPLIPATYDIVWSVVCVAIIAVVFYKYVIPRLTKVLNERADKIEGGIAKAEAAQAEAQQTLEQYQQQLADARLEAARIREDARTQGQQILAQMRAEAQAESDRIVAAGHAQLEAQRQQILTELRSEVGRTAVDLAEKIIGQSVSDEAKQAASIERFLSELDSSDAGIGVGR.

The helical transmembrane segment at 25 to 45 (IVWSVVCVAIIAVVFYKYVIP) threads the bilayer.

The protein belongs to the ATPase B chain family. F-type ATPases have 2 components, F(1) - the catalytic core - and F(0) - the membrane proton channel. F(1) has five subunits: alpha(3), beta(3), gamma(1), delta(1), epsilon(1). F(0) has three main subunits: a(1), b(2) and c(10-14). The alpha and beta chains form an alternating ring which encloses part of the gamma chain. F(1) is attached to F(0) by a central stalk formed by the gamma and epsilon chains, while a peripheral stalk is formed by the delta and b chains.

Its subcellular location is the cell membrane. F(1)F(0) ATP synthase produces ATP from ADP in the presence of a proton or sodium gradient. F-type ATPases consist of two structural domains, F(1) containing the extramembraneous catalytic core and F(0) containing the membrane proton channel, linked together by a central stalk and a peripheral stalk. During catalysis, ATP synthesis in the catalytic domain of F(1) is coupled via a rotary mechanism of the central stalk subunits to proton translocation. In terms of biological role, component of the F(0) channel, it forms part of the peripheral stalk, linking F(1) to F(0). This chain is ATP synthase subunit b, found in Nocardia farcinica (strain IFM 10152).